The following is a 278-amino-acid chain: DNA repair protein RecO (278 aa).

The segment covering 1 to 12 (MGTNDALTSTED) has biased composition (polar residues). Positions 1–42 (MGTNDALTSTEDAVTAGANDAPLPAPPEPPRKARRATSRTSD) are disordered.

This sequence belongs to the RecO family.

Functionally, involved in DNA repair and RecF pathway recombination. This chain is DNA repair protein RecO, found in Burkholderia lata (strain ATCC 17760 / DSM 23089 / LMG 22485 / NCIMB 9086 / R18194 / 383).